The chain runs to 220 residues: Ribose-5-phosphate isomerase A (220 aa).

Substrate contacts are provided by residues 28–31 (TGST), 81–84 (DGAD), and 94–97 (KGGG). Glu-103 functions as the Proton acceptor in the catalytic mechanism. Substrate is bound at residue Lys-121.

The protein belongs to the ribose 5-phosphate isomerase family. As to quaternary structure, homodimer.

The catalysed reaction is aldehydo-D-ribose 5-phosphate = D-ribulose 5-phosphate. It functions in the pathway carbohydrate degradation; pentose phosphate pathway; D-ribose 5-phosphate from D-ribulose 5-phosphate (non-oxidative stage): step 1/1. In terms of biological role, catalyzes the reversible conversion of ribose-5-phosphate to ribulose 5-phosphate. This Aromatoleum aromaticum (strain DSM 19018 / LMG 30748 / EbN1) (Azoarcus sp. (strain EbN1)) protein is Ribose-5-phosphate isomerase A.